A 93-amino-acid polypeptide reads, in one-letter code: MKKTLMLLAMVVALVILPFFINHGGEYGGSDGEAERQIQAIAPQYKPWFQPLYEPASGEIESLLFTLQGSLGAAVIFYILGYCKGKQRRDDRA.

Transmembrane regions (helical) follow at residues 5 to 25 (LMLL…NHGG) and 63 to 83 (LLFT…LGYC).

It belongs to the CbiN family. In terms of assembly, forms an energy-coupling factor (ECF) transporter complex composed of an ATP-binding protein (A component, CbiO), a transmembrane protein (T component, CbiQ) and 2 possible substrate-capture proteins (S components, CbiM and CbiN) of unknown stoichimetry.

It is found in the cell inner membrane. Its pathway is cofactor biosynthesis; adenosylcobalamin biosynthesis. In terms of biological role, part of the energy-coupling factor (ECF) transporter complex CbiMNOQ involved in cobalt import. The sequence is that of Cobalt transport protein CbiN from Salmonella newport (strain SL254).